Here is a 179-residue protein sequence, read N- to C-terminus: Guanosine-3',5'-bis(diphosphate) 3'-pyrophosphohydrolase MESH1 (179 aa).

Gly-2 is subject to N-acetylglycine. Residue Lys-25 is modified to N6-acetyllysine. One can recognise an HD domain in the interval 32–127 (YINHPIGVAR…VKLADKLYNL (96 aa)). 3 residues coordinate Mn(2+): His-35, His-61, and Asp-62. Active-site nucleophile residues include Glu-65 and Asp-66. Lys-97 carries the N6-acetyllysine modification. Asp-122 contributes to the Mn(2+) binding site. Residue Lys-123 is modified to N6-acetyllysine.

This sequence belongs to the MESH1 family. The cofactor is Mn(2+).

The catalysed reaction is guanosine 3',5'-bis(diphosphate) + H2O = GDP + diphosphate + H(+). In terms of biological role, ppGpp hydrolyzing enzyme involved in starvation response. The protein is Guanosine-3',5'-bis(diphosphate) 3'-pyrophosphohydrolase MESH1 (Hddc3) of Mus musculus (Mouse).